The chain runs to 298 residues: Nucleotide-binding protein MAV_3359 (298 aa).

Residue 18 to 25 (GLSGAGRG) participates in ATP binding. GTP is bound at residue 69 to 72 (DVRS).

It belongs to the RapZ-like family.

Displays ATPase and GTPase activities. The sequence is that of Nucleotide-binding protein MAV_3359 from Mycobacterium avium (strain 104).